A 221-amino-acid chain; its full sequence is UPF0758 protein NTHI1125 (221 aa).

In terms of domain architecture, MPN spans 98-221 (PIINDLETVK…CYSFAENCLL (124 aa)). Zn(2+)-binding residues include His-170, His-172, and Asp-183. The JAMM motif signature appears at 170 to 183 (HNHPSGITEPSYSD).

It belongs to the UPF0758 family.

This is UPF0758 protein NTHI1125 from Haemophilus influenzae (strain 86-028NP).